The following is a 518-amino-acid chain: Cytochrome P450 monooxygenase psoD (518 aa).

Cys442 is a binding site for heme.

Belongs to the cytochrome P450 family. Requires heme as cofactor.

Its pathway is secondary metabolite biosynthesis. In terms of biological role, cytochrome P450 monooxygenase; part of the gene cluster that mediates the biosynthesis of pseurotin A, a competitive inhibitor of chitin synthase and an inducer of nerve-cell proliferation. The PKS-NRPS hybrid synthetase psoA is responsible for the biosynthesis of azaspirene, one of the first intermediates having the 1-oxa-7-azaspiro[4,4]-non-2-ene-4,6-dione core of pseurotin, via condensation of one acetyl-CoA, 4 malonyl-CoA, and a L-phenylalanine molecule. The dual-functional monooxygenase/methyltransferase psoF seems to be involved in the addition of the C3 methyl group onto the pseurotin scaffold. Azaspirene is then converted to synerazol through 4 steps including oxidation of C17 by the cytochrome P450 monooxygenase psoD, O-methylation of the hydroxy group of C8 by the methyltransferase psoC, and the trans-to-cis isomerization of the C13 olefin by the glutathione S-transferase psoE. The fourth step of synerazol production is performed by the dual-functional monooxygenase/methyltransferase psoF which seems to catalyze the epoxidation of the intermediate deepoxy-synerazol. Synerazol can be attacked by a water molecule nonenzymatically at two different positions to yield two diol products, pseurotin A and pseurotin D. The polypeptide is Cytochrome P450 monooxygenase psoD (Aspergillus fumigatus (strain ATCC MYA-4609 / CBS 101355 / FGSC A1100 / Af293) (Neosartorya fumigata)).